The chain runs to 547 residues: Inactive delta-guaiene synthase (547 aa).

The Mg(2+) site is built by Asp299, Asp303, and Asp444. The short motif at Asp299 to Asp303 is the DDXXD motif element.

It belongs to the terpene synthase family. Requires Mg(2+) as cofactor.

The polypeptide is Inactive delta-guaiene synthase (C1) (Aquilaria crassna (Eagle wood)).